A 134-amino-acid chain; its full sequence is Small ribosomal subunit protein eS24A (134 aa).

The residue at position 2 (Ser2) is an N-acetylserine. The disordered stretch occupies residues 100 to 134 (IQKVARQQRKQRKNRGKKVFGTGKRLAKRKSKQQD). Composition is skewed to basic residues over residues 105–117 (RQQR…RGKK) and 124–134 (RLAKRKSKQQD).

It belongs to the eukaryotic ribosomal protein eS24 family. In terms of assembly, component of the small ribosomal subunit (SSU). Mature yeast ribosomes consist of a small (40S) and a large (60S) subunit. The 40S small subunit contains 1 molecule of ribosomal RNA (18S rRNA) and at least 33 different proteins. The large 60S subunit contains 3 rRNA molecules (25S, 5.8S and 5S rRNA) and at least 46 different proteins.

Its subcellular location is the cytoplasm. Component of the ribosome, a large ribonucleoprotein complex responsible for the synthesis of proteins in the cell. The small ribosomal subunit (SSU) binds messenger RNAs (mRNAs) and translates the encoded message by selecting cognate aminoacyl-transfer RNA (tRNA) molecules. The large subunit (LSU) contains the ribosomal catalytic site termed the peptidyl transferase center (PTC), which catalyzes the formation of peptide bonds, thereby polymerizing the amino acids delivered by tRNAs into a polypeptide chain. The nascent polypeptides leave the ribosome through a tunnel in the LSU and interact with protein factors that function in enzymatic processing, targeting, and the membrane insertion of nascent chains at the exit of the ribosomal tunnel. The chain is Small ribosomal subunit protein eS24A (rps2401) from Schizosaccharomyces pombe (strain 972 / ATCC 24843) (Fission yeast).